We begin with the raw amino-acid sequence, 450 residues long: Chromosomal replication initiator protein DnaA 2 (450 aa).

The segment at 1-87 (MLTCNECTTW…LEFVVAEHKK (87 aa)) is domain I, interacts with DnaA modulators. Residues 87 to 114 (KPSAPVASQKESNEGISEVFEETKDFEL) are domain II. A domain III, AAA+ region region spans residues 115 to 330 (KLNLSYRFDN…GAINKLTAYC (216 aa)). ATP-binding residues include glycine 159, glycine 161, lysine 162, and threonine 163. Residues 331-450 (RLFGKSLTET…VNLCKNHIVG (120 aa)) are domain IV, binds dsDNA.

Belongs to the DnaA family. Oligomerizes as a right-handed, spiral filament on DNA at oriC.

It localises to the cytoplasm. Functionally, plays an essential role in the initiation and regulation of chromosomal replication. ATP-DnaA binds to the origin of replication (oriC) to initiate formation of the DNA replication initiation complex once per cell cycle. Binds the DnaA box (a 9 base pair repeat at the origin) and separates the double-stranded (ds)DNA. Forms a right-handed helical filament on oriC DNA; dsDNA binds to the exterior of the filament while single-stranded (ss)DNA is stabiized in the filament's interior. The ATP-DnaA-oriC complex binds and stabilizes one strand of the AT-rich DNA unwinding element (DUE), permitting loading of DNA polymerase. After initiation quickly degrades to an ADP-DnaA complex that is not apt for DNA replication. Binds acidic phospholipids. The polypeptide is Chromosomal replication initiator protein DnaA 2 (Chlamydia pneumoniae (Chlamydophila pneumoniae)).